A 548-amino-acid polypeptide reads, in one-letter code: WAP, Kazal, immunoglobulin, Kunitz and NTR domain-containing protein 1 (548 aa).

The first 19 residues, 1–19 (MPALRPLLPLLLLLRLTSG), serve as a signal peptide directing secretion. A WAP domain is found at 26–79 (LGSHPGVCPNQLSPNLWVDAQSTCERECSRDQDCAAAEKCCINVCGLHSCVAAR). 7 cysteine pairs are disulfide-bonded: Cys33-Cys66, Cys49-Cys70, Cys53-Cys65, Cys59-Cys75, Cys116-Cys146, Cys120-Cys139, and Cys128-Cys157. Positions 108 to 159 (WDGQPVCRCRDRCEKEPSFTCASDGLTYYNRCYMDAEACLRGLHLHIVPCKH) constitute a Kazal-like domain. The segment at 164 to 184 (PPSSPGPPETTARPTPGAAPV) is disordered. Residues 186–279 (PALYSSPSPQ…GLLRADFPLS (94 aa)) enclose the Ig-like C2-type domain. 10 cysteine pairs are disulfide-bonded: Cys207–Cys263, Cys299–Cys351, Cys306–Cys334, Cys326–Cys347, Cys359–Cys409, Cys368–Cys392, Cys384–Cys405, Cys417–Cys489, Cys420–Cys491, and Cys431–Cys540. BPTI/Kunitz inhibitor domains follow at residues 299 to 351 (CLPD…QQAC) and 359 to 409 (CVLP…EDAC). One can recognise an NTR domain in the interval 409-540 (CPVPRTPPCR…ILELLEKQAC (132 aa)). N-linked (GlcNAc...) asparagine glycosylation occurs at Asn493.

The protein belongs to the WFIKKN family. In terms of tissue distribution, expressed in pancreas, kidney, liver, placenta, and lung.

It is found in the secreted. Functionally, protease-inhibitor that contains multiple distinct protease inhibitor domains. Probably has serine protease- and metalloprotease-inhibitor activity. This is WAP, Kazal, immunoglobulin, Kunitz and NTR domain-containing protein 1 (WFIKKN1) from Homo sapiens (Human).